The following is a 460-amino-acid chain: Benzyl alcohol O-benzoyltransferase (460 aa).

Active-site proton acceptor residues include His167 and Asp382.

Belongs to the plant acyltransferase family. Specifically expressed in flowers, mainly in the limb of flowers corollas, and, at low levels, in roots, stems, sepals and leaves.

It catalyses the reaction benzyl alcohol + benzoyl-CoA = benzyl benzoate + CoA. The catalysed reaction is benzyl alcohol + acetyl-CoA = benzyl acetate + CoA. It carries out the reaction 3-hydroxybenzyl alcohol + acetyl-CoA = 3-hydroxy-benzyl acetate + CoA. The enzyme catalyses 3-hydroxybenzyl alcohol + benzoyl-CoA = 3-hydroxy-benzyl benzoate + CoA. It catalyses the reaction 2-phenylethanol + benzoyl-CoA = phenethyl benzoate + CoA. The catalysed reaction is (3Z)-hex-3-en-1-ol + benzoyl-CoA = (3Z)-hex-3-en-1-yl benzoate + CoA. It carries out the reaction (2E)-geraniol + acetyl-CoA = (2E)-geranyl acetate + CoA. The enzyme catalyses butan-1-ol + benzoyl-CoA = butyl benzoate + CoA. It catalyses the reaction (2E)-geraniol + benzoyl-CoA = (2E)-geranyl benzoate + CoA. The catalysed reaction is octan-1-ol + benzoyl-CoA = octyl benzoate + CoA. Its pathway is aromatic compound metabolism; benzoyl-CoA degradation. In terms of biological role, involved in the production of volatile organic compounds (VOCs), including floral volatile benzenoids and phenylpropanoids (FVBP), in flowers of fragrant cultivars (e.g. cv. Mitchell and cv. V26), scent attracting pollinators (e.g. the night-active hawkmoth pollinator Manduca sexta). Acyltransferase that catalyzes the transfer of benzoyl and acetyl moieties to a large variety of potential substrate alcohols, and involved in the formation of volatile esters benzyl benzoate and phenylethyl benzoate from benzoyl-CoA. With acetyl-CoA, mainly active on benzyl alcohol, and, to a lower extent, on 3-hydroxybenzyl alcohol, geraniol, and 2-phenylethanol, but barely active on butanol, 1-octanol, 4-hydroxy-benzyl alcohol, 2-hexanol, cis-3-hexen-1-ol and linalool. With benzoyl-CoA, mainly active on benzyl alcohol, but also efficient on several substrates, including 3-hydroxybenzyl alcohol, 2-phenylethanol, geraniol, butanol, cis-3-hexen-1-ol and 1-octanol. This Petunia hybrida (Petunia) protein is Benzyl alcohol O-benzoyltransferase.